A 202-amino-acid chain; its full sequence is Recombination protein RecR (202 aa).

The C4-type zinc finger occupies 57–72; sequence CRDCRTFTEDDICAVC. The Toprim domain occupies 81–176; it reads GQICVVESPA…PATRIAHGVP (96 aa).

Belongs to the RecR family.

Functionally, may play a role in DNA repair. It seems to be involved in an RecBC-independent recombinational process of DNA repair. It may act with RecF and RecO. The polypeptide is Recombination protein RecR (Photobacterium profundum (strain SS9)).